Here is a 344-residue protein sequence, read N- to C-terminus: Methionine import ATP-binding protein MetN 1 (344 aa).

In terms of domain architecture, ABC transporter spans Ile-2–Ile-241. Gly-38–Ser-45 serves as a coordination point for ATP.

It belongs to the ABC transporter superfamily. Methionine importer (TC 3.A.1.24) family. The complex is composed of two ATP-binding proteins (MetN), two transmembrane proteins (MetI) and a solute-binding protein (MetQ).

Its subcellular location is the cell inner membrane. It carries out the reaction L-methionine(out) + ATP + H2O = L-methionine(in) + ADP + phosphate + H(+). The enzyme catalyses D-methionine(out) + ATP + H2O = D-methionine(in) + ADP + phosphate + H(+). In terms of biological role, part of the ABC transporter complex MetNIQ involved in methionine import. Responsible for energy coupling to the transport system. This chain is Methionine import ATP-binding protein MetN 1, found in Burkholderia ambifaria (strain ATCC BAA-244 / DSM 16087 / CCUG 44356 / LMG 19182 / AMMD) (Burkholderia cepacia (strain AMMD)).